Reading from the N-terminus, the 940-residue chain is Isoleucine--tRNA ligase (940 aa).

The 'HIGH' region signature appears at P58–H68. E564 lines the L-isoleucyl-5'-AMP pocket. Positions K605–S609 match the 'KMSKS' region motif. K608 is a binding site for ATP. Zn(2+) contacts are provided by C903, C906, C923, and C926.

The protein belongs to the class-I aminoacyl-tRNA synthetase family. IleS type 1 subfamily. In terms of assembly, monomer. The cofactor is Zn(2+).

The protein localises to the cytoplasm. It catalyses the reaction tRNA(Ile) + L-isoleucine + ATP = L-isoleucyl-tRNA(Ile) + AMP + diphosphate. In terms of biological role, catalyzes the attachment of isoleucine to tRNA(Ile). As IleRS can inadvertently accommodate and process structurally similar amino acids such as valine, to avoid such errors it has two additional distinct tRNA(Ile)-dependent editing activities. One activity is designated as 'pretransfer' editing and involves the hydrolysis of activated Val-AMP. The other activity is designated 'posttransfer' editing and involves deacylation of mischarged Val-tRNA(Ile). This Shewanella woodyi (strain ATCC 51908 / MS32) protein is Isoleucine--tRNA ligase.